The chain runs to 90 residues: Probable Fe(2+)-trafficking protein (90 aa).

This sequence belongs to the Fe(2+)-trafficking protein family. As to quaternary structure, monomer.

In terms of biological role, could be a mediator in iron transactions between iron acquisition and iron-requiring processes, such as synthesis and/or repair of Fe-S clusters in biosynthetic enzymes. The protein is Probable Fe(2+)-trafficking protein of Enterobacter sp. (strain 638).